A 149-amino-acid polypeptide reads, in one-letter code: UPF0251 protein Moth_1655 (149 aa).

The tract at residues 129 to 149 (AGRGPGRGRCHRHGRFGEGEH) is disordered.

Belongs to the UPF0251 family.

This chain is UPF0251 protein Moth_1655, found in Moorella thermoacetica (strain ATCC 39073 / JCM 9320).